Here is a 207-residue protein sequence, read N- to C-terminus: Segregation and condensation protein B (207 aa).

This sequence belongs to the ScpB family. In terms of assembly, homodimer. Homodimerization may be required to stabilize the binding of ScpA to the Smc head domains. Component of a cohesin-like complex composed of ScpA, ScpB and the Smc homodimer, in which ScpA and ScpB bind to the head domain of Smc. The presence of the three proteins is required for the association of the complex with DNA.

It is found in the cytoplasm. Its function is as follows. Participates in chromosomal partition during cell division. May act via the formation of a condensin-like complex containing Smc and ScpA that pull DNA away from mid-cell into both cell halves. The protein is Segregation and condensation protein B of Mycoplasma genitalium (strain ATCC 33530 / DSM 19775 / NCTC 10195 / G37) (Mycoplasmoides genitalium).